Here is a 193-residue protein sequence, read N- to C-terminus: Ancillary SecYEG translocon subunit (193 aa).

Residues M1–N8 lie on the Cytoplasmic side of the membrane. The helical transmembrane segment at I9–F29 threads the bilayer. The Periplasmic portion of the chain corresponds to S30–N193.

This sequence belongs to the YfgM family. As to quaternary structure, interacts with the SecYEG translocon. Forms a complex with PpiD.

The protein resides in the cell inner membrane. Functionally, may mediate protein transfer from the SecYEG translocon to the periplasmic chaperone network via its periplasmic C-terminal region. This is Ancillary SecYEG translocon subunit from Buchnera aphidicola subsp. Acyrthosiphon pisum (strain APS) (Acyrthosiphon pisum symbiotic bacterium).